A 500-amino-acid chain; its full sequence is Cytochrome P450 2D15 (500 aa).

Heme is bound at residue Cys-446.

The protein belongs to the cytochrome P450 family. Requires heme as cofactor. Liver. Also detected in several other tissues.

The protein localises to the endoplasmic reticulum membrane. The protein resides in the microsome membrane. It carries out the reaction an organic molecule + reduced [NADPH--hemoprotein reductase] + O2 = an alcohol + oxidized [NADPH--hemoprotein reductase] + H2O + H(+). Its function is as follows. High activity for the hydroxylation of bunitrolol and imipramine; low activity on debrisoquine. This is Cytochrome P450 2D15 (CYP2D15) from Canis lupus familiaris (Dog).